The primary structure comprises 262 residues: Acyl-[acyl-carrier-protein]--UDP-N-acetylglucosamine O-acyltransferase (262 aa).

This sequence belongs to the transferase hexapeptide repeat family. LpxA subfamily. Homotrimer.

It localises to the cytoplasm. It carries out the reaction a (3R)-hydroxyacyl-[ACP] + UDP-N-acetyl-alpha-D-glucosamine = a UDP-3-O-[(3R)-3-hydroxyacyl]-N-acetyl-alpha-D-glucosamine + holo-[ACP]. It participates in glycolipid biosynthesis; lipid IV(A) biosynthesis; lipid IV(A) from (3R)-3-hydroxytetradecanoyl-[acyl-carrier-protein] and UDP-N-acetyl-alpha-D-glucosamine: step 1/6. Its function is as follows. Involved in the biosynthesis of lipid A, a phosphorylated glycolipid that anchors the lipopolysaccharide to the outer membrane of the cell. The polypeptide is Acyl-[acyl-carrier-protein]--UDP-N-acetylglucosamine O-acyltransferase (Salmonella paratyphi B (strain ATCC BAA-1250 / SPB7)).